The primary structure comprises 346 residues: Holliday junction branch migration complex subunit RuvB (346 aa).

The segment at 2-183 (TDDRIIGAGA…FGIVQRLEFY (182 aa)) is large ATPase domain (RuvB-L). ATP is bound by residues Ile22, Arg23, Gly64, Lys67, Thr68, Thr69, 130-132 (EDF), Arg173, Tyr183, and Arg220. Thr68 provides a ligand contact to Mg(2+). The small ATPAse domain (RuvB-S) stretch occupies residues 184-254 (SVEELTRIVR…VAQAAMKMLK (71 aa)). Residues 257 to 346 (PEGFDELDRR…DLFAEVPDVG (90 aa)) form a head domain (RuvB-H) region. DNA-binding residues include Arg293, Arg312, and Arg317.

This sequence belongs to the RuvB family. As to quaternary structure, homohexamer. Forms an RuvA(8)-RuvB(12)-Holliday junction (HJ) complex. HJ DNA is sandwiched between 2 RuvA tetramers; dsDNA enters through RuvA and exits via RuvB. An RuvB hexamer assembles on each DNA strand where it exits the tetramer. Each RuvB hexamer is contacted by two RuvA subunits (via domain III) on 2 adjacent RuvB subunits; this complex drives branch migration. In the full resolvosome a probable DNA-RuvA(4)-RuvB(12)-RuvC(2) complex forms which resolves the HJ.

It is found in the cytoplasm. The enzyme catalyses ATP + H2O = ADP + phosphate + H(+). Functionally, the RuvA-RuvB-RuvC complex processes Holliday junction (HJ) DNA during genetic recombination and DNA repair, while the RuvA-RuvB complex plays an important role in the rescue of blocked DNA replication forks via replication fork reversal (RFR). RuvA specifically binds to HJ cruciform DNA, conferring on it an open structure. The RuvB hexamer acts as an ATP-dependent pump, pulling dsDNA into and through the RuvAB complex. RuvB forms 2 homohexamers on either side of HJ DNA bound by 1 or 2 RuvA tetramers; 4 subunits per hexamer contact DNA at a time. Coordinated motions by a converter formed by DNA-disengaged RuvB subunits stimulates ATP hydrolysis and nucleotide exchange. Immobilization of the converter enables RuvB to convert the ATP-contained energy into a lever motion, pulling 2 nucleotides of DNA out of the RuvA tetramer per ATP hydrolyzed, thus driving DNA branch migration. The RuvB motors rotate together with the DNA substrate, which together with the progressing nucleotide cycle form the mechanistic basis for DNA recombination by continuous HJ branch migration. Branch migration allows RuvC to scan DNA until it finds its consensus sequence, where it cleaves and resolves cruciform DNA. This chain is Holliday junction branch migration complex subunit RuvB, found in Stenotrophomonas maltophilia (strain R551-3).